We begin with the raw amino-acid sequence, 463 residues long: MHLHFTPRQIVEKLDQYIIGQKDAKKAVAVALRNRYRRSKLAENLRDEIAPKNILMIGPTGVGKTEVARRMAKLVGAPFIKVEATKFTEVGYVGRDVESMVRDLVETSVRIVKEEMVVKVQDKAEEQANQRLVEILVPSPEKQSGFKNPLEMLFGGAQNSSQTSDTQEDGEIEKKRQDVERKLAAGLLEDEIVSIEVTEQQSSMFDMLQGTGMEQMGMNFQDALGSFMPKKTKKRKLSVKEARKLLTNEEAQRLIDMDEVTQEAVYRAEQLGIIFIDEIDKIAGKQSNSVDVSREGVQRDILPIVEGSNVATKYGSVKTDYILFVAAGAFHMSKPSDLIPELQGRFPIRVELTKLSTDDFVKILIEPDNALIKQYMALLATEGIEIEFSDEAIRKIAEIAYQVNQDTDNIGARRLHTIMEKLLEDLSFEASEITLEKITITPQYVEEKLASIAKNKDVSQFIL.

ATP-binding positions include I19 and 61 to 66 (GVGKTE). The interval 154 to 174 (FGGAQNSSQTSDTQEDGEIEK) is disordered. ATP-binding residues include D277, E341, and R413.

It belongs to the ClpX chaperone family. HslU subfamily. As to quaternary structure, a double ring-shaped homohexamer of HslV is capped on each side by a ring-shaped HslU homohexamer. The assembly of the HslU/HslV complex is dependent on binding of ATP.

Its subcellular location is the cytoplasm. In terms of biological role, ATPase subunit of a proteasome-like degradation complex; this subunit has chaperone activity. The binding of ATP and its subsequent hydrolysis by HslU are essential for unfolding of protein substrates subsequently hydrolyzed by HslV. HslU recognizes the N-terminal part of its protein substrates and unfolds these before they are guided to HslV for hydrolysis. The protein is ATP-dependent protease ATPase subunit HslU of Bacillus cereus (strain G9842).